A 402-amino-acid chain; its full sequence is Probable 2,3-bisphosphoglycerate-independent phosphoglycerate mutase (402 aa).

Belongs to the BPG-independent phosphoglycerate mutase family. A-PGAM subfamily.

The catalysed reaction is (2R)-2-phosphoglycerate = (2R)-3-phosphoglycerate. It functions in the pathway carbohydrate degradation; glycolysis; pyruvate from D-glyceraldehyde 3-phosphate: step 3/5. In terms of biological role, catalyzes the interconversion of 2-phosphoglycerate and 3-phosphoglycerate. The chain is Probable 2,3-bisphosphoglycerate-independent phosphoglycerate mutase from Thermosipho melanesiensis (strain DSM 12029 / CIP 104789 / BI429).